Consider the following 813-residue polypeptide: MIRPRSNLGTLPEEPSVESKSGRTLAGITSSRKESGMRSRTSSGSAQAVGLGLGRRPSDNLFHGHADPLDTMQMLSEALPQPPKIEHGMRRERPISNDSIMTTKSSEIFSTSSSDTQSNISVATNDSEDHSFGMDKSVDNSSTNATLTNRSIENRSNGDSYSIGEKSDVSVNRSTKSGNNPLQRTQSETISVNMSHNRSMNGAMKQPTPPFMGKNSSIPNLRYNSQPQQDNRSVPNGEFGSKLYNLSNSTSAIIPNAGTGSKLALTPSQRYRLRKEQSEHALRDVIKRKEKLYDEQDGIIELQEGDIDGSFIFNVPMSSYSTTSFLNTTRQKDSATNSSSTITERITPGENQSQNNRESNMSFASTISSTSMLDFFEMPTSPIPGVNKVSDFQYLQDTTKHLSSVYLHSSTKLSKSKLSERTASADCLPLEFKEASEKGMEDLLLVSENKLDAVSHTRPSWLPPKDPEEKKLHEREISKTLSMASLDQLEKNKDRDSKIIKDETNKQKYVLLVDRNITRKSSLQSLKKIIWETPINAELRNHIYDMVLQSEARLVTERFTESFDDIIKLSNRIELTKTKEIEIRNLITANIENKAGGKYDVSDDLVLMLKLKSISQQGILPGDELLFHHLLIDDSFENLNQVWEMVNLIQMTCFNEITKDKFDSKILEKSGVVASYMLQDDSFKHEFNANCLNSNTWWNILERVNHDLFMWIIDIIVTMNSQPFKNSPINKEKYSEVNWDVYRDNKVLINYQILISFALNVLLNYHFGFNDLKSLADVKDKNFCIPISEENYLDIDEINSLFVGKWKHYFKKF.

Disordered stretches follow at residues 1–66 (MIRP…HGHA), 107–240 (EIFS…GEFG), and 331–359 (QKDS…NRES). Basic and acidic residues predominate over residues 56–66 (RPSDNLFHGHA). Positions 107–121 (EIFSTSSSDTQSNIS) are enriched in low complexity. Residues 127-138 (SEDHSFGMDKSV) are compositionally biased toward basic and acidic residues. Polar residues-rich tracts occupy residues 139-160 (DNSS…NGDS), 169-200 (VSVN…NRSM), and 214-234 (KNSS…NRSV).

It belongs to the SBE2 family.

The protein localises to the cytoplasm. It localises to the golgi apparatus. Functionally, with SBE2, is involved in cell wall integrity and polarity processes like bud growth. The protein is Protein SBE22 (SBE22) of Candida glabrata (strain ATCC 2001 / BCRC 20586 / JCM 3761 / NBRC 0622 / NRRL Y-65 / CBS 138) (Yeast).